The following is a 755-amino-acid chain: Catalase-peroxidase (755 aa).

Positions 91 to 245 form a cross-link, tryptophyl-tyrosyl-methioninium (Trp-Tyr) (with M-271); that stretch reads WHSAGTYRTA…LAAVQMGLIY (155 aa). His92 acts as the Proton acceptor in catalysis. Residues 193-229 form a disordered region; the sequence is DNRYGKDPESMQPPGEGTLVAEPAEHGNEESRTNQGE. A compositionally biased stretch (basic and acidic residues) spans 215–224; it reads PAEHGNEESR. Positions 245–271 form a cross-link, tryptophyl-tyrosyl-methioninium (Tyr-Met) (with W-91); that stretch reads YVNPEGPEGNPDPVASAKDIRETFGRM. His286 contributes to the heme binding site.

Belongs to the peroxidase family. Peroxidase/catalase subfamily. In terms of assembly, homodimer or homotetramer. The cofactor is heme b. In terms of processing, formation of the three residue Trp-Tyr-Met cross-link is important for the catalase, but not the peroxidase activity of the enzyme.

The enzyme catalyses H2O2 + AH2 = A + 2 H2O. It carries out the reaction 2 H2O2 = O2 + 2 H2O. Bifunctional enzyme with both catalase and broad-spectrum peroxidase activity. This is Catalase-peroxidase from Pseudomonas fluorescens (strain Pf0-1).